A 139-amino-acid chain; its full sequence is Small ribosomal subunit protein uS11A (139 aa).

The interval Asp119–Leu139 is disordered. A compositionally biased stretch (basic residues) spans Arg130 to Leu139.

This sequence belongs to the universal ribosomal protein uS11 family. As to quaternary structure, component of the small ribosomal subunit (SSU). Mature yeast ribosomes consist of a small (40S) and a large (60S) subunit. The 40S small subunit contains 1 molecule of ribosomal RNA (18S rRNA) and at least 33 different proteins. The large 60S subunit contains 3 rRNA molecules (25S, 5.8S and 5S rRNA) and at least 46 different proteins. uS11 interacts with eS1 forming part of the mRNA exit tunnel. uS11 interacts with snoRNA U3. uS11 interacts with MPP10. Component of the ribosomal small subunit (SSU) processome composed of at least 40 protein subunits and snoRNA U3.

The protein localises to the cytoplasm. It localises to the nucleus. The protein resides in the nucleolus. In terms of biological role, component of the ribosome, a large ribonucleoprotein complex responsible for the synthesis of proteins in the cell. The small ribosomal subunit (SSU) binds messenger RNAs (mRNAs) and translates the encoded message by selecting cognate aminoacyl-transfer RNA (tRNA) molecules. The large subunit (LSU) contains the ribosomal catalytic site termed the peptidyl transferase center (PTC), which catalyzes the formation of peptide bonds, thereby polymerizing the amino acids delivered by tRNAs into a polypeptide chain. The nascent polypeptides leave the ribosome through a tunnel in the LSU and interact with protein factors that function in enzymatic processing, targeting, and the membrane insertion of nascent chains at the exit of the ribosomal tunnel. uS11 is involved in nucleolar processing of pre-18S ribosomal RNA and ribosome assembly. The sequence is that of Small ribosomal subunit protein uS11A (rps1401) from Schizosaccharomyces pombe (strain 972 / ATCC 24843) (Fission yeast).